The sequence spans 138 residues: Holo-[acyl-carrier-protein] synthase (138 aa).

Residues Asp-8 and Glu-56 each contribute to the Mg(2+) site.

The protein belongs to the P-Pant transferase superfamily. AcpS family. The cofactor is Mg(2+).

It localises to the cytoplasm. It carries out the reaction apo-[ACP] + CoA = holo-[ACP] + adenosine 3',5'-bisphosphate + H(+). In terms of biological role, transfers the 4'-phosphopantetheine moiety from coenzyme A to a Ser of acyl-carrier-protein. The polypeptide is Holo-[acyl-carrier-protein] synthase (Thermoanaerobacter pseudethanolicus (strain ATCC 33223 / 39E) (Clostridium thermohydrosulfuricum)).